Consider the following 168-residue polypeptide: uncharacterized protein (168 aa).

Residues 1 to 21 (MVYEVLAVVSGGLLGFGVTWA) form the signal peptide.

This is an uncharacterized protein from Archaeoglobus fulgidus (strain ATCC 49558 / DSM 4304 / JCM 9628 / NBRC 100126 / VC-16).